A 123-amino-acid polypeptide reads, in one-letter code: Large ribosomal subunit protein uL29 (123 aa).

The residue at position 19 (Lys19) is an N6-acetyllysine. A Glycyl lysine isopeptide (Lys-Gly) (interchain with G-Cter in SUMO2) cross-link involves residue Lys25. Ser29 carries the phosphoserine modification. Lys43 bears the N6-acetyllysine mark. The disordered stretch occupies residues 85 to 123 (PKKTRAMRRRLNKHEESLKTKKQQRKERLYPLRKYAVKA). Residues 86 to 96 (KKTRAMRRRLN) are compositionally biased toward basic residues.

The protein belongs to the universal ribosomal protein uL29 family. In terms of assembly, component of the large ribosomal subunit.

It is found in the cytoplasm. In terms of biological role, component of the large ribosomal subunit. The ribosome is a large ribonucleoprotein complex responsible for the synthesis of proteins in the cell. The chain is Large ribosomal subunit protein uL29 (RPL35) from Oryctolagus cuniculus (Rabbit).